Here is a 687-residue protein sequence, read N- to C-terminus: E3 ubiquitin-protein ligase RNF19B (687 aa).

A required for ubiquitin ligase activity and for protection against staurosporin-induced cell death region spans residues 1–294; sequence MRLRNDCLVR…VCGCEFCWLC (294 aa). The tract at residues 53–88 is disordered; the sequence is RTRAAPEPSVPSPPPSPPPPPPPPVSVPPPPSSPGG. Positions 60-85 are enriched in pro residues; the sequence is PSVPSPPPSPPPPPPPPVSVPPPPSS. Residues 91–313 are TRIAD supradomain; the sequence is SLIECPLCLV…LSPSGCTFWG (223 aa). Cys95, Cys98, Cys118, Cys121, Cys182, Cys187, Cys204, Cys209, Cys214, Cys217, His222, Cys227, Cys263, and Cys266 together coordinate Zn(2+). Residues 95 to 144 form an RING-type 1 zinc finger; that stretch reads CPLCLVRQPPEEIPELLSCRHRSCLRCLRQYLRIEICESRVNLRCPECAE. The IBR-type zinc-finger motif lies at 161–227; sequence TRKYEEFLLR…KHVWHPNQTC (67 aa). The RING-type 2; atypical zinc-finger motif lies at 263-294; it reads CPRCSAYIIKMNDGSCNHMTCSVCGCEFCWLC. Cys278 is an active-site residue. Residues Cys283, Cys286, Cys291, Cys294, His302, and Cys309 each coordinate Zn(2+). Transmembrane regions (helical) follow at residues 330–350 and 391–411; these read LIGA…AMVI and VVAA…VYGV. The interval 618 to 662 is disordered; that stretch reads SIRSDLESSDAQSDDVPDLASEEYDSPHLFPPSPSNALQESPPHR. Acidic residues predominate over residues 629 to 641; that stretch reads QSDDVPDLASEEY.

The protein belongs to the RBR family. RNF19 subfamily. Interacts with UBE2L3, UBE2L6 and UCKL1.

Its subcellular location is the cytoplasmic granule membrane. The protein localises to the endoplasmic reticulum membrane. The catalysed reaction is [E2 ubiquitin-conjugating enzyme]-S-ubiquitinyl-L-cysteine + [acceptor protein]-L-lysine = [E2 ubiquitin-conjugating enzyme]-L-cysteine + [acceptor protein]-N(6)-ubiquitinyl-L-lysine.. The protein operates within protein modification; protein ubiquitination. In terms of biological role, E3 ubiquitin-protein ligase which accepts ubiquitin from E2 ubiquitin-conjugating enzymes UBE2L3 and UBE2L6 in the form of a thioester and then directly transfers the ubiquitin to targeted substrates, such as UCKL1. Involved in the cytolytic activity of natural killer cells and cytotoxic T-cells. Protects against staurosporin-induced cell death. This is E3 ubiquitin-protein ligase RNF19B (rnf19b) from Xenopus laevis (African clawed frog).